Reading from the N-terminus, the 180-residue chain is Translation initiation factor IF-3 (180 aa).

This sequence belongs to the IF-3 family. Monomer.

Its subcellular location is the cytoplasm. In terms of biological role, IF-3 binds to the 30S ribosomal subunit and shifts the equilibrium between 70S ribosomes and their 50S and 30S subunits in favor of the free subunits, thus enhancing the availability of 30S subunits on which protein synthesis initiation begins. The protein is Translation initiation factor IF-3 of Salmonella typhimurium (strain LT2 / SGSC1412 / ATCC 700720).